The chain runs to 352 residues: Deoxyhypusine synthase-like protein (352 aa).

This sequence belongs to the deoxyhypusine synthase family.

The sequence is that of Deoxyhypusine synthase-like protein from Coxiella burnetii (strain Dugway 5J108-111).